The sequence spans 441 residues: UDP-N-acetylglucosamine--N-acetylmuramyl-(pentapeptide) pyrophosphoryl-undecaprenol N-acetylglucosamine transferase (441 aa).

Residues 28–30 (TGG), asparagine 140, arginine 176, serine 204, isoleucine 257, and glutamine 302 each bind UDP-N-acetyl-alpha-D-glucosamine.

Belongs to the glycosyltransferase 28 family. MurG subfamily.

Its subcellular location is the cell inner membrane. It carries out the reaction di-trans,octa-cis-undecaprenyl diphospho-N-acetyl-alpha-D-muramoyl-L-alanyl-D-glutamyl-meso-2,6-diaminopimeloyl-D-alanyl-D-alanine + UDP-N-acetyl-alpha-D-glucosamine = di-trans,octa-cis-undecaprenyl diphospho-[N-acetyl-alpha-D-glucosaminyl-(1-&gt;4)]-N-acetyl-alpha-D-muramoyl-L-alanyl-D-glutamyl-meso-2,6-diaminopimeloyl-D-alanyl-D-alanine + UDP + H(+). The protein operates within cell wall biogenesis; peptidoglycan biosynthesis. Cell wall formation. Catalyzes the transfer of a GlcNAc subunit on undecaprenyl-pyrophosphoryl-MurNAc-pentapeptide (lipid intermediate I) to form undecaprenyl-pyrophosphoryl-MurNAc-(pentapeptide)GlcNAc (lipid intermediate II). The chain is UDP-N-acetylglucosamine--N-acetylmuramyl-(pentapeptide) pyrophosphoryl-undecaprenol N-acetylglucosamine transferase from Xanthomonas oryzae pv. oryzae (strain KACC10331 / KXO85).